The sequence spans 337 residues: tRNA N6-adenosine threonylcarbamoyltransferase (337 aa).

Residues His111 and His115 each coordinate Fe cation. Substrate is bound by residues 134–138, Asp167, Gly180, and Asn272; that span reads LVSGG. Asp300 serves as a coordination point for Fe cation.

The protein belongs to the KAE1 / TsaD family. It depends on Fe(2+) as a cofactor.

It is found in the cytoplasm. The enzyme catalyses L-threonylcarbamoyladenylate + adenosine(37) in tRNA = N(6)-L-threonylcarbamoyladenosine(37) in tRNA + AMP + H(+). Required for the formation of a threonylcarbamoyl group on adenosine at position 37 (t(6)A37) in tRNAs that read codons beginning with adenine. Is involved in the transfer of the threonylcarbamoyl moiety of threonylcarbamoyl-AMP (TC-AMP) to the N6 group of A37, together with TsaE and TsaB. TsaD likely plays a direct catalytic role in this reaction. In Salmonella choleraesuis (strain SC-B67), this protein is tRNA N6-adenosine threonylcarbamoyltransferase.